Consider the following 240-residue polypeptide: Uridylate kinase (240 aa).

12 to 15 lines the ATP pocket; sequence KLSG. An involved in allosteric activation by GTP region spans residues 20–25; the sequence is GEQGFG. UMP is bound at residue Gly-54. Gly-55 and Arg-59 together coordinate ATP. UMP contacts are provided by residues Asp-74 and 135 to 142; that span reads TGNPYFST. Residues Asn-163, Tyr-169, and Asp-172 each contribute to the ATP site.

The protein belongs to the UMP kinase family. Homohexamer.

The protein localises to the cytoplasm. It catalyses the reaction UMP + ATP = UDP + ADP. It participates in pyrimidine metabolism; CTP biosynthesis via de novo pathway; UDP from UMP (UMPK route): step 1/1. Its activity is regulated as follows. Allosterically activated by GTP. Inhibited by UTP. Functionally, catalyzes the reversible phosphorylation of UMP to UDP. This is Uridylate kinase from Bacillus cereus (strain ATCC 14579 / DSM 31 / CCUG 7414 / JCM 2152 / NBRC 15305 / NCIMB 9373 / NCTC 2599 / NRRL B-3711).